The chain runs to 1188 residues: Probable phosphoenolpyruvate synthase (1188 aa).

The region spanning Leu536 to Ile670 is the DOD-type homing endonuclease domain. His824 (tele-phosphohistidine intermediate) is an active-site residue. Residues Arg917, Arg964, Glu1061, Gly1083, Thr1084, Asn1085, and Asp1086 each contribute to the substrate site. Position 1061 (Glu1061) interacts with Mg(2+). Asp1086 provides a ligand contact to Mg(2+). The active-site Proton donor is the Cys1133.

This sequence belongs to the PEP-utilizing enzyme family. Mg(2+) serves as cofactor. In terms of processing, this protein undergoes a protein self splicing that involves a post-translational excision of the intervening region (intein) followed by peptide ligation.

The catalysed reaction is pyruvate + ATP + H2O = phosphoenolpyruvate + AMP + phosphate + 2 H(+). Its pathway is carbohydrate biosynthesis; gluconeogenesis. Catalyzes the phosphorylation of pyruvate to phosphoenolpyruvate. The chain is Probable phosphoenolpyruvate synthase (ppsA) from Methanocaldococcus jannaschii (strain ATCC 43067 / DSM 2661 / JAL-1 / JCM 10045 / NBRC 100440) (Methanococcus jannaschii).